A 377-amino-acid chain; its full sequence is Nitric oxide reductase FlRd-NAD(+) reductase (377 aa).

Belongs to the FAD-dependent oxidoreductase family. FAD is required as a cofactor.

Its subcellular location is the cytoplasm. The enzyme catalyses 2 reduced [nitric oxide reductase rubredoxin domain] + NAD(+) + H(+) = 2 oxidized [nitric oxide reductase rubredoxin domain] + NADH. It functions in the pathway nitrogen metabolism; nitric oxide reduction. In terms of biological role, one of at least two accessory proteins for anaerobic nitric oxide (NO) reductase. Reduces the rubredoxin moiety of NO reductase. This is Nitric oxide reductase FlRd-NAD(+) reductase (norW) from Shigella boydii serotype 4 (strain Sb227).